The sequence spans 323 residues: Aldo-keto reductase family 1 member C4 (323 aa).

NADP(+) is bound by residues 20 to 24 (GFGTY) and aspartate 50. The Proton donor role is filled by tyrosine 55. Residue histidine 117 participates in substrate binding. Residues 166 to 167 (SN), glutamine 190, 216 to 221 (HSALGT), and 270 to 280 (KSYNEQRIREN) contribute to the NADP(+) site.

The protein belongs to the aldo/keto reductase family. In terms of assembly, monomer. In terms of processing, the N-terminus is blocked. Liver specific.

The protein localises to the cytoplasm. It is found in the cytosol. The enzyme catalyses a 3alpha-hydroxysteroid + NADP(+) = a 3-oxosteroid + NADPH + H(+). The catalysed reaction is a 3alpha-hydroxysteroid + NAD(+) = a 3-oxosteroid + NADH + H(+). It catalyses the reaction 5alpha-androstane-3alpha,17beta-diol + NADP(+) = 17beta-hydroxy-5alpha-androstan-3-one + NADPH + H(+). It carries out the reaction 5alpha-androstane-3beta,17beta-diol + NADP(+) = 17beta-hydroxy-5alpha-androstan-3-one + NADPH + H(+). The enzyme catalyses 5alpha-androstane-3alpha,17beta-diol + NAD(+) = 17beta-hydroxy-5alpha-androstan-3-one + NADH + H(+). The catalysed reaction is 17beta-estradiol + NADP(+) = estrone + NADPH + H(+). It catalyses the reaction 17beta-estradiol + NAD(+) = estrone + NADH + H(+). It carries out the reaction (20S)-hydroxypregn-4-en-3-one + NADP(+) = progesterone + NADPH + H(+). The enzyme catalyses (20S)-hydroxypregn-4-en-3-one + NAD(+) = progesterone + NADH + H(+). The catalysed reaction is androsterone + NADP(+) = 5alpha-androstan-3,17-dione + NADPH + H(+). It catalyses the reaction testosterone + NADP(+) = androst-4-ene-3,17-dione + NADPH + H(+). It carries out the reaction testosterone + NAD(+) = androst-4-ene-3,17-dione + NADH + H(+). The enzyme catalyses 3alpha-hydroxy-5alpha-androstane 17-O-(beta-D-glucuronate) + NADP(+) = 5alpha-dihydrotestosterone 17-O-(beta-D-glucuronate) + NADPH + H(+). The catalysed reaction is (3beta,5alpha,17beta)-3-hydroxy-androstan-17-yl sulfate + NADP(+) = 5alpha-dihydrotestosterone sulfate + NADPH + H(+). It catalyses the reaction 5alpha-androstane-3alpha,17beta-diol + NAD(+) = androsterone + NADH + H(+). It carries out the reaction chlordecone alcohol + NADP(+) = chlordecone + NADPH + H(+). The protein operates within steroid metabolism. With respect to regulation, inhibited by nonsteroidal the anti-inflammatory drugs (NSAID) flufenamic. The oxidation reaction is inhibited by low micromolar concentrations of NADPH. Its function is as follows. Cytosolic aldo-keto reductase that catalyzes the NADH and NADPH-dependent reduction of ketosteroids to hydroxysteroids. Liver specific enzyme that acts as an NAD(P)(H)-dependent 3-, 17- and 20-ketosteroid reductase on the steroid nucleus and side chain. Displays the ability to catalyze both oxidation and reduction in vitro, but most probably acts as a reductase in vivo since the oxidase activity measured in vitro is inhibited by physiological concentration of NADPH. Acts preferentially as a 3-alpha-hydroxysteroid dehydrogenase (HSD) with a subsidiary 3-beta-HSD activity. Catalyzes efficiently the transformation of the potent androgen 5-alpha-dihydrotestosterone (5alpha-DHT or 17beta-hydroxy-5alpha-androstan-3-one) into the less active form, 5-alpha-androstan-3-alpha,17-beta-diol (3-alpha-diol). Catalyzes the reduction of estrone into 17beta-estradiol but with low efficiency. Metabolizes a broad spectrum of natural and synthetic therapeutic steroid and plays an important role in metabolism of androgens, estrogens, progestereone and conjugated steroids. Catalyzes the biotransformation of the pesticide chlordecone (kepone) to its corresponding alcohol leading to increased biliary excretion of the pesticide and concomitant reduction of its neurotoxicity since bile is the major excretory route. The polypeptide is Aldo-keto reductase family 1 member C4 (AKR1C4) (Homo sapiens (Human)).